Consider the following 430-residue polypeptide: MTLNNDLPLNNIGFTGSGLNDGTEGLDDLFSSSIVDNEPLEALVETPTFASPSPNLKRDQIVPSNIAKIKVIGVGGGGCNAVNRMIASGVTGIDFWAINTDSQALTNTNAPDCIQIGQKLTRGLGAGGNPAIGQKAAEESRDEIARSLEGTDLVFITAGMGGGTGTGAAPIVAEVAKEMGCLTVGIVTRPFTFEGRRRAKQAEEGINALQSRVDTLIVIPNNQLLSVIPAETPLQEAFRVADDILRQGVQGISDIIIIPGLVNVDFADVRAVMADAGSALMGIGVGSGKSRAKEAATAAISSPLLESSIQGAKGVVFNVTGGTDLTLHEVNVAAEIIYEVVDADANIIFGAVIDDRLQGEMRITVIATGFNGEKEKPQAKTSSKPVLSGPPAGVETVPSTTTPEDPLGEIPMAPELDIPDFLQKRRFPRR.

GTP is bound by residues 76–80 (GGGCN), 163–165 (GTG), Glu-194, Arg-198, and Asp-242. Residues 374–418 (KEKPQAKTSSKPVLSGPPAGVETVPSTTTPEDPLGEIPMAPELDI) form a disordered region.

Belongs to the FtsZ family. As to quaternary structure, homodimer. Polymerizes to form a dynamic ring structure in a strictly GTP-dependent manner. Interacts directly with several other division proteins.

Its subcellular location is the cytoplasm. Its function is as follows. Essential cell division protein that forms a contractile ring structure (Z ring) at the future cell division site. The regulation of the ring assembly controls the timing and the location of cell division. One of the functions of the FtsZ ring is to recruit other cell division proteins to the septum to produce a new cell wall between the dividing cells. Binds GTP and shows GTPase activity. This chain is Cell division protein FtsZ, found in Synechocystis sp. (strain ATCC 27184 / PCC 6803 / Kazusa).